The primary structure comprises 205 residues: Max-like protein homolog 2 (205 aa).

2 stretches are compositionally biased toward low complexity: residues 1 to 12 (MSRSRSAAASSS) and 26 to 40 (SASS…ATNS). The disordered stretch occupies residues 1–58 (MSRSRSAAASSSQKPDDMDLMSPDGSASSPSAPNTPATNSGGFSSDRKKATHLRCERQ). Residues 45–58 (SDRKKATHLRCERQ) are compositionally biased toward basic and acidic residues. The interval 47–60 (RKKATHLRCERQRR) is basic motif. The 55-residue stretch at 47–101 (RKKATHLRCERQRREAINSGYSDLKDLIPQTTTSLGCKTTNAAILFRACDFMSQL) folds into the bHLH domain. Residues 61-101 (EAINSGYSDLKDLIPQTTTSLGCKTTNAAILFRACDFMSQL) form a helix-loop-helix motif region. Residues 98–132 (MSQLKTDISDADKQLAQLNAQAAALEMIASEYEQM) are a coiled coil.

As to expression, widely expressed.

It localises to the nucleus. Its subcellular location is the cytoplasm. The protein resides in the mitochondrion. Functionally, transcription factor. Binds to the E box motif 5'-CACGTG-3', probably in a heterodimeric complex with mml-1. Involved in modulating longevity in response to TOR signaling, dietary restriction, the decline in protein homeostasis associated with normal aging, germline signaling and the insulin-like signaling pathway. Plays a role in autophagy. Involved in regulating migration of the ray 1 precursor cells in the male tail, acting in concert with Wnt and semaphorin signaling pathways. Regulates transcription of genes encoding extracellular matrix (ECM) components which may contribute to the substratum required for migration of the neighboring ray 1 precursor cells. Required for resistance to oxidative stress. Involved in promoting infection by the microsporidian pathogen N.parisii, probably acting independently of its canonical partner, mml-1. This chain is Max-like protein homolog 2, found in Caenorhabditis elegans.